The primary structure comprises 246 residues: DNA repair protein RecO (246 aa).

It belongs to the RecO family.

Involved in DNA repair and RecF pathway recombination. In Bifidobacterium adolescentis (strain ATCC 15703 / DSM 20083 / NCTC 11814 / E194a), this protein is DNA repair protein RecO.